Reading from the N-terminus, the 354-residue chain is MLELDFEQQLGDLYLQVNTQLPTEGITAVFGLSGAGKTSLINVIAGLIRPRKGRIVLNDHVLVDIEKGICLSPEQRRIGYVFQDARLFPHYRVKGNLQYGMSPEMKPEFDSIVSLLGIEHLLSRFPLTLSGGEKQRVAIGRALLTAPDLLLMDEPLASLDLPRKRELLPYLEKLSGEVNIPILYVSHNLDEILRLAENVLVVDNGKVRATGKLEEVWSSSALRLWLQKETLSSILNVSMVEHHNRYEMTAVALADQALWLPKMDVQPGTDLRIRIDASDVSLVLEPPRGSSIRNILAVKVVEFFDDNGHVDVKLVLSGHYLWARITPWARDELNLRSGQWLYAQIKSVSFHRQL.

The ABC transporter domain occupies 1–229 (MLELDFEQQL…SALRLWLQKE (229 aa)). ATP is bound at residue 31-38 (GLSGAGKT). The Mop domain occupies 289–354 (GSSIRNILAV…IKSVSFHRQL (66 aa)).

It belongs to the ABC transporter superfamily. Molybdate importer (TC 3.A.1.8) family. In terms of assembly, the complex is composed of two ATP-binding proteins (ModC), two transmembrane proteins (ModB) and a solute-binding protein (ModA).

It is found in the cell inner membrane. It carries out the reaction molybdate(out) + ATP + H2O = molybdate(in) + ADP + phosphate + H(+). In terms of biological role, part of the ABC transporter complex ModABC involved in molybdenum import. Responsible for energy coupling to the transport system. This Photorhabdus laumondii subsp. laumondii (strain DSM 15139 / CIP 105565 / TT01) (Photorhabdus luminescens subsp. laumondii) protein is Molybdenum import ATP-binding protein ModC.